Consider the following 199-residue polypeptide: UPF0301 protein Rfer_1377 (199 aa).

The protein belongs to the UPF0301 (AlgH) family.

This chain is UPF0301 protein Rfer_1377, found in Albidiferax ferrireducens (strain ATCC BAA-621 / DSM 15236 / T118) (Rhodoferax ferrireducens).